A 1311-amino-acid polypeptide reads, in one-letter code: Sterol regulatory element-binding protein cleavage-activating protein (1311 aa).

Over 1-18 (MPLIDKLRERISRAFYSH) the chain is Cytoplasmic. Residues 19–39 (GLLCASYPIPIIILTALCILA) form a helical membrane-spanning segment. At 40–277 (SCYPLLKLPL…HIVHVHFKEE (238 aa)) the chain is on the lumenal side. Residues 46–282 (KLPLPGTGPV…HFKEEIGIAE (237 aa)) form a loop-1 region. Asn-242 and Asn-261 each carry an N-linked (GlcNAc...) asparagine glycan. The chain crosses the membrane as a helical span at residues 278-298 (IGIAELIPLVTTYIILFAYIY). In terms of domain architecture, SSD spans 282-440 (ELIPLVTTYI…MFFFTTVLSI (159 aa)). Over 299 to 310 (FSTRKIDLVKSK) the chain is Cytoplasmic. Residues 311–331 (WGLALAAVVTVLSSLLMSVGL) form a helical membrane-spanning segment. The Lumenal segment spans residues 332-342 (CTLFGLTPTLN). A helical transmembrane segment spans residues 343–363 (GGEIFPYLVVVIGLENVLVLT). At 364–399 (KSVVSTPVDLEVKLRIAQGLRNESWFIMKNMATELG) the chain is on the cytoplasmic side. Residues 400–420 (IILIGYFTLVPAIQEFCLFAV) traverse the membrane as a helical segment. Val-421 is a topological domain (lumenal). A helical transmembrane segment spans residues 422 to 442 (GLVSDFFLQMFFFTTVLSIDI). Topologically, residues 443–512 (RRMELADLNK…FFARTRLAQR (70 aa)) are cytoplasmic. Residues 445 to 450 (MELADL) carry the ER export signal motif. A helical membrane pass occupies residues 513-533 (IIMAGTVVWIGILVYTDPAGL). A loop-7 region spans residues 529–726 (DPAGLRNYLT…QTPADVTLYK (198 aa)). At 534–723 (RNYLTVHVTE…TENQTPADVT (190 aa)) the chain is on the lumenal side. Asn-583 and Asn-651 each carry an N-linked (GlcNAc...) asparagine glycan. A helical membrane pass occupies residues 724-744 (LYKVAALGLASGIFLVLFFFL). Residues 745–1311 (LYRLLCPKNY…YVPSVLEKLD (567 aa)) lie on the Cytoplasmic side of the membrane. Residues 747–1311 (RLLCPKNYGQ…YVPSVLEKLD (565 aa)) are interaction with srebf. WD repeat units follow at residues 790–827 (GHHM…CLTI), 997–1034 (SFES…LRCS), 1037–1076 (DGQS…NQLQ), 1109–1146 (AHRK…CLFT), 1149–1187 (GHSG…RVSH), 1190–1227 (GHRG…KLYS), and 1230–1267 (QDLG…LLQT).

This sequence belongs to the WD repeat SCAP family. As to quaternary structure, membrane region forms a homotetramer. Component of the SCAP-SREBP complex (composed of SCAP and srebf1/srebp1 or srebf2/srebp2). Forms a ternary complex with insig1 or insig2 through its transmembrane domains at high sterol concentrations. Interacts with the SEC23-SEC24 complex.

Its subcellular location is the endoplasmic reticulum membrane. The protein resides in the golgi apparatus membrane. It localises to the cytoplasmic vesicle. The protein localises to the COPII-coated vesicle membrane. Functionally, escort protein required for cholesterol as well as lipid homeostasis. Regulates export of the SCAP-SREBP complex from the endoplasmic reticulum to the Golgi upon low cholesterol, thereby regulating the processing of sterol regulatory element-binding proteins (SREBPs) SREBF1/SREBP1 and SREBF2/SREBP2. At high sterol concentrations, formation of a ternary complex with INSIG (INSIG1 or INSIG2) leads to mask the ER export signal in SCAP, promoting retention of the complex in the endoplasmic reticulum. Low sterol concentrations trigger release of INSIG, a conformational change in the SSD domain of SCAP, unmasking of the ER export signal, promoting recruitment into COPII-coated vesicles and transport of the SCAP-SREBP to the Golgi: in the Golgi, SREBPs are then processed, releasing the transcription factor fragment of SREBPs from the membrane, its import into the nucleus and up-regulation of LDLR, INSIG1 and the mevalonate pathway. Binds cholesterol via its SSD domain. In Xenopus laevis (African clawed frog), this protein is Sterol regulatory element-binding protein cleavage-activating protein.